We begin with the raw amino-acid sequence, 307 residues long: Ribosomal RNA small subunit methyltransferase H (307 aa).

S-adenosyl-L-methionine is bound by residues 32–34, Asp52, Phe78, Asp99, and Gln106; that span reads GGH.

It belongs to the methyltransferase superfamily. RsmH family.

It is found in the cytoplasm. The enzyme catalyses cytidine(1402) in 16S rRNA + S-adenosyl-L-methionine = N(4)-methylcytidine(1402) in 16S rRNA + S-adenosyl-L-homocysteine + H(+). Specifically methylates the N4 position of cytidine in position 1402 (C1402) of 16S rRNA. In Acinetobacter baumannii (strain AB307-0294), this protein is Ribosomal RNA small subunit methyltransferase H.